The following is a 400-amino-acid chain: Elongation factor Tu (400 aa).

The tr-type G domain maps to 10 to 209; that stretch reads KPHVNIGTIG…EVDKYIPTPE (200 aa). Residues 19–26 form a G1 region; that stretch reads GHVDHGKT. Residue 19–26 participates in GTP binding; it reads GHVDHGKT. Residue threonine 26 participates in Mg(2+) binding. A G2 region spans residues 60–64; that stretch reads GITIN. Positions 81–84 are G3; that stretch reads DCPG. GTP-binding positions include 81–85 and 136–139; these read DCPGH and NKAD. Positions 136 to 139 are G4; that stretch reads NKAD. The tract at residues 174–176 is G5; sequence SGL.

This sequence belongs to the TRAFAC class translation factor GTPase superfamily. Classic translation factor GTPase family. EF-Tu/EF-1A subfamily. In terms of assembly, monomer.

The protein resides in the cytoplasm. It carries out the reaction GTP + H2O = GDP + phosphate + H(+). In terms of biological role, GTP hydrolase that promotes the GTP-dependent binding of aminoacyl-tRNA to the A-site of ribosomes during protein biosynthesis. The chain is Elongation factor Tu from Heliobacterium modesticaldum (strain ATCC 51547 / Ice1).